The following is a 313-amino-acid chain: Proline iminopeptidase (313 aa).

The region spanning 35–298 is the AB hydrolase-1 domain; the sequence is KPVVILHGGP…TPGAGHSAFE (264 aa). The active-site Nucleophile is the serine 110. Aspartate 266 is a catalytic residue. The Proton donor role is filled by histidine 294.

Belongs to the peptidase S33 family.

Its subcellular location is the cytoplasm. It carries out the reaction Release of N-terminal proline from a peptide.. Specifically catalyzes the removal of N-terminal proline residues from peptides. The chain is Proline iminopeptidase (pip) from Xylella fastidiosa (strain 9a5c).